A 315-amino-acid polypeptide reads, in one-letter code: Ester hydrolase C11orf54 homolog (315 aa).

Histidine 266, histidine 268, and histidine 278 together coordinate Zn(2+).

In terms of assembly, monomer. Requires Zn(2+) as cofactor.

It localises to the nucleus. The protein resides in the cytoplasm. Exhibits ester hydrolase activity on the substrate p-nitrophenyl acetate, in vitro. Regulates DNA damage and repair by regulating HIF1A degradation via chaperone-mediated autophagy (CMA). The sequence is that of Ester hydrolase C11orf54 homolog from Mus musculus (Mouse).